Consider the following 189-residue polypeptide: MDWLLAGLGNPGAEYARTRHNAGFWTLQTLADRVGASLRMEKRWHCLAATARASGLELGLCMPQDFMNRSGGPVQAMAAFYKVAAERILVMHDELDLPPGAARLKRGGGHGGHNGLRDLDRALGTRDYWRLRIGIGHPGHKDAVIPYVLSAPPPADKTLIDEAIERSLGVLPDFLCGRTDAAQKSLHSD.

Tyrosine 15 serves as a coordination point for tRNA. Catalysis depends on histidine 20, which acts as the Proton acceptor. TRNA contacts are provided by phenylalanine 66, asparagine 68, and asparagine 114.

Belongs to the PTH family. As to quaternary structure, monomer.

The protein localises to the cytoplasm. The catalysed reaction is an N-acyl-L-alpha-aminoacyl-tRNA + H2O = an N-acyl-L-amino acid + a tRNA + H(+). In terms of biological role, hydrolyzes ribosome-free peptidyl-tRNAs (with 1 or more amino acids incorporated), which drop off the ribosome during protein synthesis, or as a result of ribosome stalling. Functionally, catalyzes the release of premature peptidyl moieties from peptidyl-tRNA molecules trapped in stalled 50S ribosomal subunits, and thus maintains levels of free tRNAs and 50S ribosomes. This chain is Peptidyl-tRNA hydrolase, found in Acidithiobacillus ferrooxidans (strain ATCC 23270 / DSM 14882 / CIP 104768 / NCIMB 8455) (Ferrobacillus ferrooxidans (strain ATCC 23270)).